A 228-amino-acid chain; its full sequence is tRNA (guanine-N(1)-)-methyltransferase (228 aa).

S-adenosyl-L-methionine is bound by residues Gly-108 and 127 to 132 (VGDFIL).

The protein belongs to the RNA methyltransferase TrmD family. In terms of assembly, homodimer.

It is found in the cytoplasm. It catalyses the reaction guanosine(37) in tRNA + S-adenosyl-L-methionine = N(1)-methylguanosine(37) in tRNA + S-adenosyl-L-homocysteine + H(+). In terms of biological role, specifically methylates guanosine-37 in various tRNAs. The sequence is that of tRNA (guanine-N(1)-)-methyltransferase from Metamycoplasma arthritidis (strain 158L3-1) (Mycoplasma arthritidis).